The sequence spans 576 residues: Carboxypeptidase S (576 aa).

Over 1–19 (MIALPVEKAPRKSLWQRHR) the chain is Cytoplasmic. Lysine 8 is covalently cross-linked (Glycyl lysine isopeptide (Lys-Gly) (interchain with G-Cter in ubiquitin)). Residues 20-40 (AFISGIVALIIIGTFFLTSGL) form a helical membrane-spanning segment. At 41-576 (HPAPPHEAKR…EYIVNVNEYA (536 aa)) the chain is on the lumenal side. The tract at residues 44 to 65 (PPHEAKRPHHGKGPMHSPKCEK) is disordered. N-linked (GlcNAc...) asparagine glycosylation occurs at asparagine 88. Residue histidine 168 participates in Zn(2+) binding. Residue aspartate 170 is part of the active site. N-linked (GlcNAc...) asparagine glycosylation is present at asparagine 176. Position 205 (aspartate 205) interacts with Zn(2+). The N-linked (GlcNAc...) asparagine glycan is linked to asparagine 228. Glutamate 239 functions as the Proton acceptor in the catalytic mechanism. 2 residues coordinate Zn(2+): glutamate 240 and aspartate 268. N-linked (GlcNAc...) asparagine glycans are attached at residues asparagine 381 and asparagine 525. Residue histidine 547 coordinates Zn(2+).

This sequence belongs to the peptidase M20A family. YscS is synthesized as one polypeptide chain precursor which after carbohydrate modification in the secretory pathway yields two active precursor molecules. The proteolytically unprocessed forms are associated with the membrane, whereas the mature forms of the enzyme are soluble. The cofactor is Zn(2+). Post-translationally, glycosylated. Ubiquitinated. Ubiquitination mediates sorting into internal vesicles in late endosomes. TUL1 is required for ubiquitination.

It localises to the vacuole membrane. The catalysed reaction is Release of a C-terminal amino acid from a peptide in which glycine is the penultimate amino acid, e.g. Z-Gly-|-Leu.. Necessary for use of certain peptides as sole nitrogen source. May also cleave intracellularly generated peptides to recycle amino acids for protein synthesis. This is Carboxypeptidase S (CPS1) from Saccharomyces cerevisiae (strain ATCC 204508 / S288c) (Baker's yeast).